The following is a 213-amino-acid chain: Uridine kinase (213 aa).

ATP is bound at residue 15–22 (GASASGKS).

Belongs to the uridine kinase family.

The protein localises to the cytoplasm. The enzyme catalyses uridine + ATP = UMP + ADP + H(+). It carries out the reaction cytidine + ATP = CMP + ADP + H(+). Its pathway is pyrimidine metabolism; CTP biosynthesis via salvage pathway; CTP from cytidine: step 1/3. It participates in pyrimidine metabolism; UMP biosynthesis via salvage pathway; UMP from uridine: step 1/1. The chain is Uridine kinase from Pectobacterium carotovorum subsp. carotovorum (strain PC1).